The primary structure comprises 463 residues: Glycine--tRNA ligase (463 aa).

Substrate contacts are provided by Arg-100 and Glu-175. Residues 207 to 209 (RNE), 217 to 222 (FRTREF), 291 to 292 (EL), and 335 to 338 (GADR) each bind ATP. 222 to 226 (FEQME) provides a ligand contact to substrate. Substrate is bound at residue 331-335 (EPSLG).

The protein belongs to the class-II aminoacyl-tRNA synthetase family. In terms of assembly, homodimer.

The protein resides in the cytoplasm. The catalysed reaction is tRNA(Gly) + glycine + ATP = glycyl-tRNA(Gly) + AMP + diphosphate. Functionally, catalyzes the attachment of glycine to tRNA(Gly). This is Glycine--tRNA ligase from Clostridium tetani (strain Massachusetts / E88).